The following is a 372-amino-acid chain: Cytochrome b (372 aa).

Transmembrane regions (helical) follow at residues 25–45 (FGSM…FLAI), 69–90 (WIMQ…YIHI), 105–125 (WLSG…GYVL), and 170–190 (FFAL…IHII). Heme b is bound by residues histidine 75 and histidine 89. Residues histidine 174 and histidine 188 each contribute to the heme b site. Histidine 193 lines the a ubiquinone pocket. Transmembrane regions (helical) follow at residues 218 to 238 (YKDM…LSFS), 280 to 300 (LGGT…PFTH), 312 to 332 (LSQA…WTAS), and 339 to 358 (FVTI…ITIP).

It belongs to the cytochrome b family. As to quaternary structure, the cytochrome bc1 complex contains 3 respiratory subunits (MT-CYB, CYC1 and UQCRFS1), 2 core proteins (UQCRC1 and UQCRC2) and probably 6 low-molecular weight proteins. Heme b is required as a cofactor.

The protein localises to the mitochondrion inner membrane. Component of the ubiquinol-cytochrome c reductase complex (complex III or cytochrome b-c1 complex) that is part of the mitochondrial respiratory chain. The b-c1 complex mediates electron transfer from ubiquinol to cytochrome c. Contributes to the generation of a proton gradient across the mitochondrial membrane that is then used for ATP synthesis. The protein is Cytochrome b (MT-CYB) of Naja multifasciata (Burrowing cobra).